The following is a 687-amino-acid chain: MSVIQLVFRLLCVLDLLLAVSASGLHGRNRTLSHEYCVLGAGPAGLQMGYFLSRSQRDYIILERNAGPGSFFNIYPRHRKLISINKIYTGRRNKEFNLRHDWNSLLSDRPDLLFQRISRKLYPSADDFPHYLSLFEKELGLKVKYGTDVGRIKASDFNGHQGYVLTDQNGVNYQCRVLLVSTGLWVPQEVDFRGSDLVEGYESIPTDPEEFKDQAVLILGKGNSAFETAQSILGRASRIHLYSPSPVRLAWQTHYVGDLRAVNNELLDTYQLKSLDGLVEGRLEDIAIVRRAKDRGKRRAAKKRNSTSTKRNEPLYLTLTELLDDQNDTNISNVTGQNLPGYHTDNFSLRQPYDRVIRCLGFRFNFSIFDGSARPPQSSGARGRLPGVTAWYEGRGTPNMFVLGIAAHSRDYRMSAGGFIHGFRYTVRAVHKILEQRYHNIAWPTTNIPISQLQSWILRRVNEASGTYQMFGVLGDIILLQGSHCEYLEEFPLQALPQLSALSGRSISDHGLLVLVMQYGLNHTDTLGPGRAESEWTKAWKSNFLHPVLYYYKTLPTDKDMRQRPVGWPLPRPEAVHHMVEDFLTEWDQPISHSQPLRRFLEHCLKTDLRAFYAESCFLLSLTSRNPPLFCRQGYLRKQGIMGNRHLWQHAREAGLMEDAALSEDASVPEYLNHAGAAVISTVNFDL.

An N-terminal signal peptide occupies residues 1–22; it reads MSVIQLVFRLLCVLDLLLAVSA. Residues Asn-29 and Asn-305 are each glycosylated (N-linked (GlcNAc...) asparagine).

This sequence belongs to the FOXRED2 family. Requires FAD as cofactor. In terms of processing, N-glycosylated.

The protein resides in the endoplasmic reticulum lumen. In terms of biological role, probable flavoprotein which may function in endoplasmic reticulum associated degradation (ERAD). May bind non-native proteins in the endoplasmic reticulum and target them to the ubiquitination machinery for subsequent degradation. This chain is FAD-dependent oxidoreductase domain-containing protein 2 (foxred2), found in Danio rerio (Zebrafish).